The sequence spans 802 residues: Lon protease (802 aa).

Positions 21–215 (LPLLPVRDII…KIIQILNAEI (195 aa)) constitute a Lon N-terminal domain. 367–374 (GPPGVGKT) lines the ATP pocket. The 182-residue stretch at 603-784 (ENDVGVATGL…DEVISLTIER (182 aa)) folds into the Lon proteolytic domain. Catalysis depends on residues Ser-690 and Lys-733.

This sequence belongs to the peptidase S16 family. In terms of assembly, homohexamer. Organized in a ring with a central cavity.

The protein resides in the cytoplasm. The catalysed reaction is Hydrolysis of proteins in presence of ATP.. In terms of biological role, ATP-dependent serine protease that mediates the selective degradation of mutant and abnormal proteins as well as certain short-lived regulatory proteins. Required for cellular homeostasis and for survival from DNA damage and developmental changes induced by stress. Degrades polypeptides processively to yield small peptide fragments that are 5 to 10 amino acids long. Binds to DNA in a double-stranded, site-specific manner. This Endomicrobium trichonymphae protein is Lon protease.